The chain runs to 660 residues: MNDHPAQDAFQHAELDWDENGLPQSRHYGDVYFSRASGLAETEHVFLAQNDLPRRFAAMQPDECLVIGETGFGTGLNFLCAWQLFERSASARARLHFVSVEKHPLTFADMQRALALWPELQAQAEQLLEQYVALNPGYQRLVFAGGRVVLTLLIGDVLECLPSLDARIDAWFLDGFAPAKNPQMWQPALFSEMARLSAPGATLGTFTSAGFVRRGLIEAGFDMQRVPGYGHKREILRGHLQSSTAQMADKPWFARPGRTVRERRAVVIGAGLAGCATAAALAARGWRVSVLERHADAAQEGSGNPQGVLYLKLSAHGTALSKLVVGGFSYTRRLLGHLQQGQDWQACGVLQLIYDDKERQRQAELAEAFPPSLVHPLERDAAEALAGVALTEGGLFYPDAGWAHPPALCRWLLQRPGIELLRHREALDLRRHGEAWQVLGGEGVLAEAPVVVLAGAADAARFEQSAWLPLKRIRGQISALPATARSGQLRTVLCAKGYVAPPRDGTHTLGASFNFQQTDDAPSVAEHQANLEMLEQISTDLYQRLQADPQRTEALQGRVAFRCTSPDYLPLIGPLADPQRFAEAYAALARNARQSVQAVCPWLDGLYVNTAHGSRGMISAPLSGELLAAWLDDEPLPLPREVAEACHPNRFLLRKLIRGT.

Residues 1–241 (MNDHPAQDAF…KREILRGHLQ (241 aa)) are tRNA (mnm(5)s(2)U34)-methyltransferase. Residues 268 to 660 (IGAGLAGCAT…FLLRKLIRGT (393 aa)) are FAD-dependent cmnm(5)s(2)U34 oxidoreductase.

This sequence in the N-terminal section; belongs to the methyltransferase superfamily. tRNA (mnm(5)s(2)U34)-methyltransferase family. The protein in the C-terminal section; belongs to the DAO family. FAD serves as cofactor.

The protein resides in the cytoplasm. The catalysed reaction is 5-aminomethyl-2-thiouridine(34) in tRNA + S-adenosyl-L-methionine = 5-methylaminomethyl-2-thiouridine(34) in tRNA + S-adenosyl-L-homocysteine + H(+). In terms of biological role, catalyzes the last two steps in the biosynthesis of 5-methylaminomethyl-2-thiouridine (mnm(5)s(2)U) at the wobble position (U34) in tRNA. Catalyzes the FAD-dependent demodification of cmnm(5)s(2)U34 to nm(5)s(2)U34, followed by the transfer of a methyl group from S-adenosyl-L-methionine to nm(5)s(2)U34, to form mnm(5)s(2)U34. This Stutzerimonas stutzeri (strain A1501) (Pseudomonas stutzeri) protein is tRNA 5-methylaminomethyl-2-thiouridine biosynthesis bifunctional protein MnmC.